A 327-amino-acid polypeptide reads, in one-letter code: tRNA dimethylallyltransferase (327 aa).

14–21 (GPTASGKT) is an ATP binding site. 16–21 (TASGKT) contacts substrate. 2 interaction with substrate tRNA regions span residues 39-42 (DSAL) and 163-167 (QRIQR).

The protein belongs to the IPP transferase family. As to quaternary structure, monomer. Requires Mg(2+) as cofactor.

It carries out the reaction adenosine(37) in tRNA + dimethylallyl diphosphate = N(6)-dimethylallyladenosine(37) in tRNA + diphosphate. In terms of biological role, catalyzes the transfer of a dimethylallyl group onto the adenine at position 37 in tRNAs that read codons beginning with uridine, leading to the formation of N6-(dimethylallyl)adenosine (i(6)A). The sequence is that of tRNA dimethylallyltransferase from Xanthomonas campestris pv. campestris (strain 8004).